We begin with the raw amino-acid sequence, 170 residues long: Acireductone dioxygenase (170 aa).

Fe(2+) is bound by residues histidine 99, histidine 101, glutamate 105, and histidine 144. Histidine 99, histidine 101, glutamate 105, and histidine 144 together coordinate Ni(2+).

The protein belongs to the acireductone dioxygenase (ARD) family. Monomer. Fe(2+) serves as cofactor. Ni(2+) is required as a cofactor.

The catalysed reaction is 1,2-dihydroxy-5-(methylsulfanyl)pent-1-en-3-one + O2 = 3-(methylsulfanyl)propanoate + CO + formate + 2 H(+). The enzyme catalyses 1,2-dihydroxy-5-(methylsulfanyl)pent-1-en-3-one + O2 = 4-methylsulfanyl-2-oxobutanoate + formate + 2 H(+). It functions in the pathway amino-acid biosynthesis; L-methionine biosynthesis via salvage pathway; L-methionine from S-methyl-5-thio-alpha-D-ribose 1-phosphate: step 5/6. In terms of biological role, catalyzes 2 different reactions between oxygen and the acireductone 1,2-dihydroxy-3-keto-5-methylthiopentene (DHK-MTPene) depending upon the metal bound in the active site. Fe-containing acireductone dioxygenase (Fe-ARD) produces formate and 2-keto-4-methylthiobutyrate (KMTB), the alpha-ketoacid precursor of methionine in the methionine recycle pathway. Ni-containing acireductone dioxygenase (Ni-ARD) produces methylthiopropionate, carbon monoxide and formate, and does not lie on the methionine recycle pathway. In Bacillus thuringiensis subsp. konkukian (strain 97-27), this protein is Acireductone dioxygenase.